The following is a 119-amino-acid chain: Large ribosomal subunit protein eL31z (119 aa).

This sequence belongs to the eukaryotic ribosomal protein eL31 family.

The protein is Large ribosomal subunit protein eL31z (RPL31A) of Arabidopsis thaliana (Mouse-ear cress).